The following is a 377-amino-acid chain: tRNA pseudouridine synthase Pus10 (377 aa).

Catalysis depends on D206, which acts as the Nucleophile. Positions 270 and 339 each coordinate substrate.

The protein belongs to the pseudouridine synthase Pus10 family.

It catalyses the reaction uridine(54) in tRNA = pseudouridine(54) in tRNA. It carries out the reaction uridine(55) in tRNA = pseudouridine(55) in tRNA. Functionally, responsible for synthesis of pseudouridine from uracil-54 and uracil-55 in the psi GC loop of transfer RNAs. This chain is tRNA pseudouridine synthase Pus10, found in Picrophilus torridus (strain ATCC 700027 / DSM 9790 / JCM 10055 / NBRC 100828 / KAW 2/3).